We begin with the raw amino-acid sequence, 132 residues long: Small ribosomal subunit protein uS8 (132 aa).

This sequence belongs to the universal ribosomal protein uS8 family. As to quaternary structure, part of the 30S ribosomal subunit. Contacts proteins S5 and S12.

One of the primary rRNA binding proteins, it binds directly to 16S rRNA central domain where it helps coordinate assembly of the platform of the 30S subunit. This chain is Small ribosomal subunit protein uS8, found in Kocuria rhizophila (strain ATCC 9341 / DSM 348 / NBRC 103217 / DC2201).